A 455-amino-acid chain; its full sequence is Bifunctional protein GlmU (455 aa).

The tract at residues 1–230 is pyrophosphorylase; the sequence is MTKRNAIILA…FDESMGVNDR (230 aa). UDP-N-acetyl-alpha-D-glucosamine is bound by residues 9–12, K23, Q73, 78–79, 101–103, G140, E155, N170, and N228; these read LAAG, GT, and SGD. D103 serves as a coordination point for Mg(2+). Residue N228 participates in Mg(2+) binding. Positions 231–251 are linker; the sequence is VALARANKVMRNRINTHWMRE. Residues 252-455 are N-acetyltransferase; that stretch reads GVSMIDPETT…KENYAKKLPW (204 aa). 2 residues coordinate UDP-N-acetyl-alpha-D-glucosamine: R333 and K351. H363 (proton acceptor) is an active-site residue. UDP-N-acetyl-alpha-D-glucosamine-binding residues include Y366 and N377. Acetyl-CoA contacts are provided by residues 386–387, S405, A423, and R440; that span reads NY.

The protein in the N-terminal section; belongs to the N-acetylglucosamine-1-phosphate uridyltransferase family. This sequence in the C-terminal section; belongs to the transferase hexapeptide repeat family. In terms of assembly, homotrimer. Mg(2+) serves as cofactor.

The protein localises to the cytoplasm. The catalysed reaction is alpha-D-glucosamine 1-phosphate + acetyl-CoA = N-acetyl-alpha-D-glucosamine 1-phosphate + CoA + H(+). It catalyses the reaction N-acetyl-alpha-D-glucosamine 1-phosphate + UTP + H(+) = UDP-N-acetyl-alpha-D-glucosamine + diphosphate. It participates in nucleotide-sugar biosynthesis; UDP-N-acetyl-alpha-D-glucosamine biosynthesis; N-acetyl-alpha-D-glucosamine 1-phosphate from alpha-D-glucosamine 6-phosphate (route II): step 2/2. Its pathway is nucleotide-sugar biosynthesis; UDP-N-acetyl-alpha-D-glucosamine biosynthesis; UDP-N-acetyl-alpha-D-glucosamine from N-acetyl-alpha-D-glucosamine 1-phosphate: step 1/1. It functions in the pathway bacterial outer membrane biogenesis; LPS lipid A biosynthesis. In terms of biological role, catalyzes the last two sequential reactions in the de novo biosynthetic pathway for UDP-N-acetylglucosamine (UDP-GlcNAc). The C-terminal domain catalyzes the transfer of acetyl group from acetyl coenzyme A to glucosamine-1-phosphate (GlcN-1-P) to produce N-acetylglucosamine-1-phosphate (GlcNAc-1-P), which is converted into UDP-GlcNAc by the transfer of uridine 5-monophosphate (from uridine 5-triphosphate), a reaction catalyzed by the N-terminal domain. The protein is Bifunctional protein GlmU of Limosilactobacillus reuteri (strain DSM 20016) (Lactobacillus reuteri).